Here is a 191-residue protein sequence, read N- to C-terminus: Thymidine kinase (191 aa).

Residues 9 to 16 (GSMNSGKT) and 85 to 88 (DESQ) each bind ATP. Catalysis depends on Glu86, which acts as the Proton acceptor. Zn(2+) is bound by residues Cys143, Cys146, Cys181, and Cys184.

It belongs to the thymidine kinase family. Homotetramer.

The protein localises to the cytoplasm. It carries out the reaction thymidine + ATP = dTMP + ADP + H(+). In Listeria monocytogenes serotype 4b (strain F2365), this protein is Thymidine kinase.